We begin with the raw amino-acid sequence, 84 residues long: Putative membrane protein insertion efficiency factor (84 aa).

It belongs to the UPF0161 family.

Its subcellular location is the cell inner membrane. Functionally, could be involved in insertion of integral membrane proteins into the membrane. The protein is Putative membrane protein insertion efficiency factor of Shewanella baltica (strain OS195).